Here is a 57-residue protein sequence, read N- to C-terminus: Large ribosomal subunit protein bL32 (57 aa).

Residues 1–21 (MAVQQRRSSKHRRDKRRSHDA) form a disordered region. Residues 7 to 18 (RSSKHRRDKRRS) are compositionally biased toward basic residues.

It belongs to the bacterial ribosomal protein bL32 family.

The chain is Large ribosomal subunit protein bL32 (rpmF) from Mycoplasma pneumoniae (strain ATCC 29342 / M129 / Subtype 1) (Mycoplasmoides pneumoniae).